A 1399-amino-acid chain; its full sequence is DNA-directed RNA polymerase subunit beta' (1399 aa).

The Zn(2+) site is built by C70, C72, C85, and C88. 3 residues coordinate Mg(2+): D460, D462, and D464. C814, C888, C895, and C898 together coordinate Zn(2+).

Belongs to the RNA polymerase beta' chain family. As to quaternary structure, the RNAP catalytic core consists of 2 alpha, 1 beta, 1 beta' and 1 omega subunit. When a sigma factor is associated with the core the holoenzyme is formed, which can initiate transcription. It depends on Mg(2+) as a cofactor. Zn(2+) serves as cofactor.

It catalyses the reaction RNA(n) + a ribonucleoside 5'-triphosphate = RNA(n+1) + diphosphate. In terms of biological role, DNA-dependent RNA polymerase catalyzes the transcription of DNA into RNA using the four ribonucleoside triphosphates as substrates. This chain is DNA-directed RNA polymerase subunit beta', found in Pseudomonas fluorescens (strain ATCC BAA-477 / NRRL B-23932 / Pf-5).